A 373-amino-acid chain; its full sequence is UPF0725 protein At1g23950 (373 aa).

T2 is subject to N-acetylthreonine.

It belongs to the UPF0725 (EMB2204) family.

This Arabidopsis thaliana (Mouse-ear cress) protein is UPF0725 protein At1g23950.